We begin with the raw amino-acid sequence, 739 residues long: UPF0313 protein YgiQ (739 aa).

Residues 372 to 650 (AYEMIRFSVN…KALLRYHDPA (279 aa)) enclose the Radical SAM core domain. 3 residues coordinate [4Fe-4S] cluster: Cys386, Cys390, and Cys393. A disordered region spans residues 685 to 739 (REARRQNRNTRPALTKHTPMATQRQTPATAKKASSTQSRPVNAGAKKRPKAAVGR). Residues 704 to 724 (MATQRQTPATAKKASSTQSRP) are compositionally biased toward polar residues. Residues 729–739 (AKKRPKAAVGR) show a composition bias toward basic residues.

It belongs to the UPF0313 family. [4Fe-4S] cluster serves as cofactor.

The protein is UPF0313 protein YgiQ of Shigella flexneri.